We begin with the raw amino-acid sequence, 251 residues long: Probable metal-binding protein YrpE (251 aa).

Residues 1–30 (MNILFSKRLGILTIGSLLVLAGCQTSGSSA) form the signal peptide. Over residues 25-41 (TSGSSAGESNQTTSSSA) the composition is skewed to polar residues. Residues 25–72 (TSGSSAGESNQTTSSSAVEEDSSKTQEQTSDSHTHEHSHDHSHAHDEE) are disordered. Basic and acidic residues predominate over residues 54-72 (SDSHTHEHSHDHSHAHDEE). The Zn(2+) site is built by histidine 203, histidine 212, histidine 214, glutamate 247, and histidine 251.

This sequence belongs to the calycin superfamily. ZinT family.

This Bacillus subtilis (strain 168) protein is Probable metal-binding protein YrpE (yrpE).